Reading from the N-terminus, the 396-residue chain is L-lactate dehydrogenase (396 aa).

The FMN hydroxy acid dehydrogenase domain occupies 1 to 380 (MIISAASDYR…TQDSLVQVLG (380 aa)). Position 24 (Y24) interacts with substrate. 2 residues coordinate FMN: S106 and Q127. Y129 lines the substrate pocket. T155 lines the FMN pocket. R164 lines the substrate pocket. K251 serves as a coordination point for FMN. H275 serves as the catalytic Proton acceptor. Substrate is bound at residue R278. Residue 306-330 (DSGIRNGLDVVRMIALGADTVLLGR) coordinates FMN.

It belongs to the FMN-dependent alpha-hydroxy acid dehydrogenase family. It depends on FMN as a cofactor.

The protein resides in the cell inner membrane. The catalysed reaction is (S)-lactate + A = pyruvate + AH2. Catalyzes the conversion of L-lactate to pyruvate. Is coupled to the respiratory chain. This Escherichia coli O1:K1 / APEC protein is L-lactate dehydrogenase.